The chain runs to 290 residues: 2-dehydropantoate 2-reductase (290 aa).

Residues 8-13, N98, and A124 contribute to the NADP(+) site; that span reads GPGAVG. N98 contacts substrate. K175 functions as the Proton donor in the catalytic mechanism. Substrate-binding residues include N179 and S244. NADP(+) is bound at residue E256.

It belongs to the ketopantoate reductase family.

It is found in the cytoplasm. It catalyses the reaction (R)-pantoate + NADP(+) = 2-dehydropantoate + NADPH + H(+). The protein operates within cofactor biosynthesis; (R)-pantothenate biosynthesis; (R)-pantoate from 3-methyl-2-oxobutanoate: step 2/2. Catalyzes the NADPH-dependent reduction of ketopantoate into pantoic acid. This chain is 2-dehydropantoate 2-reductase, found in Caulobacter vibrioides (strain ATCC 19089 / CIP 103742 / CB 15) (Caulobacter crescentus).